Consider the following 1088-residue polypeptide: Exportin-T (1088 aa).

Positions 435–503 (KNNNNKNKNT…VKNANNIKNN (69 aa)) are enriched in low complexity. 2 disordered regions span residues 435–513 (KNNN…DDDD) and 1059–1088 (LNNN…KNGH).

The protein belongs to the exportin family.

Its subcellular location is the nucleus. It localises to the cytoplasm. Its function is as follows. Mediates the nuclear export of aminoacylated tRNAs. In Dictyostelium discoideum (Social amoeba), this protein is Exportin-T (xpot).